We begin with the raw amino-acid sequence, 432 residues long: Glutamate-1-semialdehyde 2,1-aminomutase (432 aa).

The residue at position 272 (K272) is an N6-(pyridoxal phosphate)lysine.

Belongs to the class-III pyridoxal-phosphate-dependent aminotransferase family. HemL subfamily. Homodimer. Requires pyridoxal 5'-phosphate as cofactor.

It localises to the cytoplasm. It carries out the reaction (S)-4-amino-5-oxopentanoate = 5-aminolevulinate. It participates in porphyrin-containing compound metabolism; protoporphyrin-IX biosynthesis; 5-aminolevulinate from L-glutamyl-tRNA(Glu): step 2/2. Its pathway is porphyrin-containing compound metabolism; chlorophyll biosynthesis. The protein is Glutamate-1-semialdehyde 2,1-aminomutase of Trichodesmium erythraeum (strain IMS101).